Reading from the N-terminus, the 202-residue chain is Mevalonate-3-phosphate 5-kinase (202 aa).

The enzyme catalyses (R)-3-phosphomevalonate + ATP = (R)-3,5-bisphosphomevalonate + ADP + H(+). Its pathway is isoprenoid biosynthesis; isopentenyl diphosphate biosynthesis via mevalonate pathway. In terms of biological role, phosphorylates mevalonate 3-phosphate to form mevalonate 3,5-bisphosphate. Functions in an alternative mevalonate pathway, only present in extreme acidophiles of the Thermoplasmatales order, which passes through mevalonate 3-phosphate rather than mevalonate 5-phosphate. The protein is Mevalonate-3-phosphate 5-kinase of Thermoplasma acidophilum (strain ATCC 25905 / DSM 1728 / JCM 9062 / NBRC 15155 / AMRC-C165).